We begin with the raw amino-acid sequence, 350 residues long: Very-long-chain 3-oxoacyl-CoA reductase (350 aa).

Residues 28–48 (SLVLLAGIGALSVGTFALRLV) form a helical membrane-spanning segment. Val79, Asp134, Asn161, Lys196, Tyr228, Lys232, Val261, and Ser263 together coordinate NADP(+). Residue Tyr228 is the Proton donor of the active site. Lys232 (lowers pKa of active site Tyr) is an active-site residue.

This sequence belongs to the short-chain dehydrogenases/reductases (SDR) family.

Its subcellular location is the endoplasmic reticulum membrane. The enzyme catalyses a very-long-chain (3R)-3-hydroxyacyl-CoA + NADP(+) = a very-long-chain 3-oxoacyl-CoA + NADPH + H(+). It functions in the pathway lipid metabolism; fatty acid biosynthesis. Its function is as follows. Component of the microsomal membrane bound fatty acid elongation system, which produces the 26-carbon very long-chain fatty acids (VLCFA) from palmitate. Catalyzes the reduction of the 3-ketoacyl-CoA intermediate that is formed in each cycle of fatty acid elongation. VLCFAs serve as precursors for ceramide and sphingolipids. In Mycosarcoma maydis (Corn smut fungus), this protein is Very-long-chain 3-oxoacyl-CoA reductase.